The sequence spans 207 residues: Large ribosomal subunit protein uL4 (207 aa).

A disordered region spans residues 49 to 78 (HAVKNRSAVSGGGRKPWRQKGTGRARQGSI).

The protein belongs to the universal ribosomal protein uL4 family. Part of the 50S ribosomal subunit.

Functionally, one of the primary rRNA binding proteins, this protein initially binds near the 5'-end of the 23S rRNA. It is important during the early stages of 50S assembly. It makes multiple contacts with different domains of the 23S rRNA in the assembled 50S subunit and ribosome. In terms of biological role, forms part of the polypeptide exit tunnel. The protein is Large ribosomal subunit protein uL4 of Streptococcus thermophilus (strain CNRZ 1066).